The primary structure comprises 403 residues: Ribosomal RNA large subunit methyltransferase I (403 aa).

One can recognise a PUA domain in the interval 9-88 (YPRLVLSKGR…ESIDIAFFTR (80 aa)).

It belongs to the methyltransferase superfamily. RlmI family.

Its subcellular location is the cytoplasm. The enzyme catalyses cytidine(1962) in 23S rRNA + S-adenosyl-L-methionine = 5-methylcytidine(1962) in 23S rRNA + S-adenosyl-L-homocysteine + H(+). Functionally, specifically methylates the cytosine at position 1962 (m5C1962) of 23S rRNA. This chain is Ribosomal RNA large subunit methyltransferase I, found in Salmonella enteritidis PT4 (strain P125109).